The chain runs to 433 residues: Enolase (433 aa).

Residue Q167 participates in (2R)-2-phosphoglycerate binding. The Proton donor role is filled by E209. 3 residues coordinate Mg(2+): D246, E291, and D318. Residues K343, R372, S373, and K394 each coordinate (2R)-2-phosphoglycerate. K343 acts as the Proton acceptor in catalysis.

Belongs to the enolase family. As to quaternary structure, component of the RNA degradosome, a multiprotein complex involved in RNA processing and mRNA degradation. Mg(2+) is required as a cofactor.

It localises to the cytoplasm. The protein resides in the secreted. The protein localises to the cell surface. It carries out the reaction (2R)-2-phosphoglycerate = phosphoenolpyruvate + H2O. Its pathway is carbohydrate degradation; glycolysis; pyruvate from D-glyceraldehyde 3-phosphate: step 4/5. Its function is as follows. Catalyzes the reversible conversion of 2-phosphoglycerate (2-PG) into phosphoenolpyruvate (PEP). It is essential for the degradation of carbohydrates via glycolysis. In Vibrio vulnificus (strain CMCP6), this protein is Enolase.